The sequence spans 285 residues: 2-dehydro-3-deoxyphosphooctonate aldolase (285 aa).

The protein belongs to the KdsA family.

The protein localises to the cytoplasm. It carries out the reaction D-arabinose 5-phosphate + phosphoenolpyruvate + H2O = 3-deoxy-alpha-D-manno-2-octulosonate-8-phosphate + phosphate. It functions in the pathway carbohydrate biosynthesis; 3-deoxy-D-manno-octulosonate biosynthesis; 3-deoxy-D-manno-octulosonate from D-ribulose 5-phosphate: step 2/3. It participates in bacterial outer membrane biogenesis; lipopolysaccharide biosynthesis. The sequence is that of 2-dehydro-3-deoxyphosphooctonate aldolase from Acidovorax ebreus (strain TPSY) (Diaphorobacter sp. (strain TPSY)).